The following is a 94-amino-acid chain: Small ribosomal subunit protein bS6 (94 aa).

This sequence belongs to the bacterial ribosomal protein bS6 family.

In terms of biological role, binds together with bS18 to 16S ribosomal RNA. This Akkermansia muciniphila (strain ATCC BAA-835 / DSM 22959 / JCM 33894 / BCRC 81048 / CCUG 64013 / CIP 107961 / Muc) protein is Small ribosomal subunit protein bS6.